Here is a 345-residue protein sequence, read N- to C-terminus: Protein RecA (345 aa).

Gly81 to Thr88 is an ATP binding site.

It belongs to the RecA family.

The protein resides in the cytoplasm. Can catalyze the hydrolysis of ATP in the presence of single-stranded DNA, the ATP-dependent uptake of single-stranded DNA by duplex DNA, and the ATP-dependent hybridization of homologous single-stranded DNAs. It interacts with LexA causing its activation and leading to its autocatalytic cleavage. This chain is Protein RecA, found in Mycoplasma mycoides.